Consider the following 305-residue polypeptide: Homoserine kinase (305 aa).

ATP is bound at residue 93-103 (PLARGLGSSAT).

This sequence belongs to the GHMP kinase family. Homoserine kinase subfamily.

It is found in the cytoplasm. It carries out the reaction L-homoserine + ATP = O-phospho-L-homoserine + ADP + H(+). It participates in amino-acid biosynthesis; L-threonine biosynthesis; L-threonine from L-aspartate: step 4/5. Its function is as follows. Catalyzes the ATP-dependent phosphorylation of L-homoserine to L-homoserine phosphate. The protein is Homoserine kinase of Trichodesmium erythraeum (strain IMS101).